The following is a 707-amino-acid chain: DNA ligase (707 aa).

A disordered region spans residues 1–23 (MSSKATQDPEAVLAEQSDDATEA). Residues 53–57 (DAEFD), 103–104 (SL), and Glu133 contribute to the NAD(+) site. Lys135 acts as the N6-AMP-lysine intermediate in catalysis. Arg156, Glu196, Lys315, and Lys339 together coordinate NAD(+). Zn(2+)-binding residues include Cys433, Cys436, Cys452, and Cys458. One can recognise a BRCT domain in the interval 622-707 (SIERTLDGLS…LENGPDTPDS (86 aa)).

This sequence belongs to the NAD-dependent DNA ligase family. LigA subfamily. It depends on Mg(2+) as a cofactor. Requires Mn(2+) as cofactor.

It catalyses the reaction NAD(+) + (deoxyribonucleotide)n-3'-hydroxyl + 5'-phospho-(deoxyribonucleotide)m = (deoxyribonucleotide)n+m + AMP + beta-nicotinamide D-nucleotide.. Functionally, DNA ligase that catalyzes the formation of phosphodiester linkages between 5'-phosphoryl and 3'-hydroxyl groups in double-stranded DNA using NAD as a coenzyme and as the energy source for the reaction. It is essential for DNA replication and repair of damaged DNA. This Mycolicibacterium vanbaalenii (strain DSM 7251 / JCM 13017 / BCRC 16820 / KCTC 9966 / NRRL B-24157 / PYR-1) (Mycobacterium vanbaalenii) protein is DNA ligase.